The following is a 121-amino-acid chain: Large ribosomal subunit protein uL14 (121 aa).

The protein belongs to the universal ribosomal protein uL14 family. Part of the 50S ribosomal subunit. Forms a cluster with proteins L3 and L19. In the 70S ribosome, L14 and L19 interact and together make contacts with the 16S rRNA in bridges B5 and B8.

Functionally, binds to 23S rRNA. Forms part of two intersubunit bridges in the 70S ribosome. This is Large ribosomal subunit protein uL14 from Prochlorococcus marinus (strain MIT 9313).